Here is a 526-residue protein sequence, read N- to C-terminus: Peptide chain release factor 3 (526 aa).

Positions 9–277 constitute a tr-type G domain; it reads NKRRTFAIIS…DFVEYAPGPQ (269 aa). GTP contacts are provided by residues 18-25, 86-90, and 140-143; these read SHPDAGKT, DTPGH, and NKLD.

Belongs to the TRAFAC class translation factor GTPase superfamily. Classic translation factor GTPase family. PrfC subfamily.

It localises to the cytoplasm. Functionally, increases the formation of ribosomal termination complexes and stimulates activities of RF-1 and RF-2. It binds guanine nucleotides and has strong preference for UGA stop codons. It may interact directly with the ribosome. The stimulation of RF-1 and RF-2 is significantly reduced by GTP and GDP, but not by GMP. The protein is Peptide chain release factor 3 of Legionella pneumophila (strain Lens).